A 978-amino-acid polypeptide reads, in one-letter code: Regulator of MON1-CCZ1 complex homolog (978 aa).

Composition is skewed to low complexity over residues 311-351 (TSTP…MISS) and 479-495 (NNNN…NNNN). 4 disordered regions span residues 311–363 (TSTP…HKEQ), 474–546 (SINQ…NSKT), 558–665 (KQQQ…NNHV), and 703–727 (EKEK…NNNI). A compositionally biased stretch (polar residues) spans 496–515 (TAQTLNSTGNLSNSISIGGM). Over residues 516–539 (NTSTDNLTTTTTTSSSISSSPSNS) the composition is skewed to low complexity. Positions 582–591 (GDGGSGGSGG) are enriched in gly residues. 2 stretches are compositionally biased toward low complexity: residues 592–663 (SFYN…NNNN) and 710–727 (NNNN…NNNI). One can recognise a Mic1 domain in the interval 735-908 (KLELDSKYLI…HPSFDKYIKL (174 aa)). A disordered region spans residues 955-978 (NNSSPTLRSSNSLNSSPRLQYSNN).

Belongs to the RMC1 family.

Its subcellular location is the lysosome membrane. The protein resides in the late endosome membrane. In terms of biological role, may have a role in autophagy. This is Regulator of MON1-CCZ1 complex homolog from Dictyostelium discoideum (Social amoeba).